The following is a 225-amino-acid chain: Large ribosomal subunit protein uL1 (225 aa).

The protein belongs to the universal ribosomal protein uL1 family. As to quaternary structure, part of the 50S ribosomal subunit.

Its function is as follows. Binds directly to 23S rRNA. Probably involved in E site tRNA release. Functionally, protein L1 is also a translational repressor protein, it controls the translation of its operon by binding to its mRNA. This Thermofilum pendens (strain DSM 2475 / Hrk 5) protein is Large ribosomal subunit protein uL1.